Here is a 379-residue protein sequence, read N- to C-terminus: Intracellular hyaluronan-binding protein 4.S (379 aa).

Disordered regions lie at residues 52–260 (THRK…FSQE) and 332–379 (SLAR…PALA). Positions 71-81 (GKKESQKDRKA) are enriched in basic and acidic residues. Positions 107–116 (KVTQNENVDS) are enriched in polar residues. Basic and acidic residues-rich tracts occupy residues 118–133 (VKVD…REVR) and 139–158 (RSAE…DKQM). A compositionally biased stretch (gly residues) spans 162–174 (GGRGGMRGRGRGG). Basic and acidic residues predominate over residues 179 to 208 (TESDNLRGKREFDRHSGSDRARMRPEDKRG). 2 stretches are compositionally biased toward acidic residues: residues 232-241 (EQVETTETEA) and 368-379 (NPDDPEDFPALA).

This sequence belongs to the SERBP1-HABP4 family. In terms of assembly, associates with ribosomes; promoting ribosome stabilization. Interacts with eef2/eEF2; promoting ribosome stabilization.

It localises to the nucleus. It is found in the cytoplasm. Its subcellular location is the stress granule. The protein localises to the nucleolus. The protein resides in the nucleus speckle. It localises to the cajal body. Functionally, ribosome-binding protein that promotes ribosome hibernation, a process during which ribosomes are stabilized in an inactive state and preserved from proteasomal degradation. Acts via its association with eef2/eEF2 factor at the A-site of the ribosome, promoting ribosome stabilization in an inactive state compatible with storage. Plays a key role in ribosome hibernation in the mature egg by promoting ribosome stabilization. Ribosomes, which are produced in large quantities during oogenesis, are stored and translationally repressed in the egg and early embryo. This is Intracellular hyaluronan-binding protein 4.S from Xenopus laevis (African clawed frog).